The sequence spans 78 residues: Xibalbin-13 1 (78 aa).

Residues Met-1 to Ala-27 form the signal peptide. Residues Glu-28–Arg-31 constitute a propeptide that is removed on maturation. Cystine bridges form between Cys-34–Cys-49, Cys-41–Cys-54, Cys-48–Cys-65, and Cys-56–Cys-63. A Serine amide modification is found at Ser-76.

It belongs to the xibalbin-13 family. In terms of tissue distribution, expressed by the venom gland.

The protein localises to the secreted. In terms of biological role, probable neurotoxin. Strongly inhibits voltage-gated potassium channels (Kv1.1/KCNA1, Kv1.2/KCNA2, Kv1.3/KCNA3, and Kv1.6/KCNA6) and mildly inhibits sodium channels (Nav1.2/SCN2A, Nav1.4/SCN4A, Nav1.5/SCN5A, Nav1.6/SCN8A, and BgNav). Induces activation of protein kinase A type II (PKA-II) and MAP kinase Erk1/2 in primary nociceptive and non-nociceptive sensory neurons. Does not show cytotoxic activity. Does not have an impact on Ca2+, cAMP, and NO signaling in the cell types analyzed. Does not interfere with the adhesion of leukocytes to endothelial cells. The sequence is that of Xibalbin-13 1 from Xibalbanus tulumensis (Blind cave remipede).